Here is a 255-residue protein sequence, read N- to C-terminus: tRNA (guanine-N(7)-)-methyltransferase (255 aa).

4 residues coordinate S-adenosyl-L-methionine: Glu-86, Glu-111, Asp-138, and Asp-161. Asp-161 is an active-site residue. Substrate-binding positions include Lys-165, Asp-197, and 234-237; that span reads TKFE.

This sequence belongs to the class I-like SAM-binding methyltransferase superfamily. TrmB family.

The catalysed reaction is guanosine(46) in tRNA + S-adenosyl-L-methionine = N(7)-methylguanosine(46) in tRNA + S-adenosyl-L-homocysteine. The protein operates within tRNA modification; N(7)-methylguanine-tRNA biosynthesis. Catalyzes the formation of N(7)-methylguanine at position 46 (m7G46) in tRNA. The sequence is that of tRNA (guanine-N(7)-)-methyltransferase from Pasteurella multocida (strain Pm70).